A 366-amino-acid chain; its full sequence is Carbamoyl phosphate synthase small chain (366 aa).

The tract at residues 1–171 (MLEKRYLVLE…KTPYVSTGSD (171 aa)) is CPSase. L-glutamine is bound by residues serine 47, glycine 221, and glycine 223. Residues 173–360 (SVVLLDFGKK…ITMMKDFKEK (188 aa)) form the Glutamine amidotransferase type-1 domain. The active-site Nucleophile is the cysteine 248. L-glutamine is bound by residues leucine 249, glutamine 252, asparagine 290, glycine 292, and tyrosine 293. Active-site residues include histidine 333 and glutamate 335.

This sequence belongs to the CarA family. Composed of two chains; the small (or glutamine) chain promotes the hydrolysis of glutamine to ammonia, which is used by the large (or ammonia) chain to synthesize carbamoyl phosphate. Tetramer of heterodimers (alpha,beta)4.

The catalysed reaction is hydrogencarbonate + L-glutamine + 2 ATP + H2O = carbamoyl phosphate + L-glutamate + 2 ADP + phosphate + 2 H(+). It catalyses the reaction L-glutamine + H2O = L-glutamate + NH4(+). Its pathway is amino-acid biosynthesis; L-arginine biosynthesis; carbamoyl phosphate from bicarbonate: step 1/1. The protein operates within pyrimidine metabolism; UMP biosynthesis via de novo pathway; (S)-dihydroorotate from bicarbonate: step 1/3. Small subunit of the glutamine-dependent carbamoyl phosphate synthetase (CPSase). CPSase catalyzes the formation of carbamoyl phosphate from the ammonia moiety of glutamine, carbonate, and phosphate donated by ATP, constituting the first step of 2 biosynthetic pathways, one leading to arginine and/or urea and the other to pyrimidine nucleotides. The small subunit (glutamine amidotransferase) binds and cleaves glutamine to supply the large subunit with the substrate ammonia. The protein is Carbamoyl phosphate synthase small chain of Staphylococcus epidermidis (strain ATCC 35984 / DSM 28319 / BCRC 17069 / CCUG 31568 / BM 3577 / RP62A).